The following is a 182-amino-acid chain: CD-NTase-associated protein 15 (182 aa).

2 helical membrane passes run 11 to 31 and 33 to 53; these read ITGW…CTVW and IGWI…TIGY.

It belongs to the CBASS Cap15 membrane effector family. As to quaternary structure, the beta barrel domain oligomerizes; in the presence of cyclic nucleotides (probably 3',2'-cGAMP) higher-level oligomers occur.

It localises to the cell membrane. Effector protein of a CBASS antivirus system. CBASS (cyclic oligonucleotide-based antiphage signaling system) provides immunity against bacteriophage. The CD-NTase protein (CdnE) synthesizes cyclic nucleotides in response to infection; these serve as specific second messenger signals. The signals activate a diverse range of effectors, leading to bacterial cell death and thus abortive phage infection. This system triggers membrane disruption without lysis. A type I-B CBASS system. Binds cyclic nucleotide second messenger 3',2'-cGAMP, probably oligomerizing, and induces cell membrane shrinkage and rupture, leading to cell death. In terms of biological role, protects S.aureus against phage infection. When the CBASS operon (cdnE-cap15) is introduced in S.aureus strain RN4220 there is strong protection against lytic DNA phages 80alpha-vir and phi-NM1-gamma-6 but little to no protection against phages phi-NM4-gamma-4 or phi-12-gamma-3. The protein is CD-NTase-associated protein 15 of Staphylococcus schleiferi.